Here is a 296-residue protein sequence, read N- to C-terminus: LysM and putative peptidoglycan-binding domain-containing protein 4 (296 aa).

Residues 1–217 (MRHKELLSKT…PMDGADCGIQ (217 aa)) lie on the Extracellular side of the membrane. Asparagine 30 carries an N-linked (GlcNAc...) asparagine glycan. Positions 74-118 (LQRELAQEDSLNKLALQYGCKVADIKKVNNFIREQDLYALKSIKS) constitute a LysM domain. A helical transmembrane segment spans residues 218 to 238 (WWNAVFIMLLIGIVLPIFYLV). Residues 239–296 (YFKIQASGETPNSLNTAAIPNGSMAMGTVPGQAPRLAVAVPTVPSADSQFSQTTQAGN) lie on the Cytoplasmic side of the membrane.

Its subcellular location is the membrane. This chain is LysM and putative peptidoglycan-binding domain-containing protein 4 (LYSMD4), found in Pongo abelii (Sumatran orangutan).